A 305-amino-acid chain; its full sequence is tRNA pseudouridine synthase B (305 aa).

D39 functions as the Nucleophile in the catalytic mechanism.

The protein belongs to the pseudouridine synthase TruB family. Type 1 subfamily.

It carries out the reaction uridine(55) in tRNA = pseudouridine(55) in tRNA. Its function is as follows. Responsible for synthesis of pseudouridine from uracil-55 in the psi GC loop of transfer RNAs. The polypeptide is tRNA pseudouridine synthase B (Staphylococcus aureus (strain Mu50 / ATCC 700699)).